We begin with the raw amino-acid sequence, 804 residues long: Angiotensin-converting enzyme 2 (804 aa).

An N-terminal signal peptide occupies residues 1–17 (MTGSFWLLLSLVAVTAA). Residues 18–739 (QSTTEEQAKT…LGPPYEPPVT (722 aa)) are Extracellular-facing. The region spanning 19 to 606 (STTEEQAKTF…QNRNSFVGWS (588 aa)) is the Peptidase M2 domain. N-linked (GlcNAc...) asparagine glycans are attached at residues Asn-53 and Asn-90. Position 168 (Arg-168) interacts with chloride. Arg-272 serves as a coordination point for substrate. A glycan (N-linked (GlcNAc...) asparagine) is linked at Asn-298. An intrachain disulfide couples Cys-343 to Cys-360. Substrate is bound at residue 344–345 (HP). Residue His-373 participates in Zn(2+) binding. The active-site Proton acceptor is the Glu-374. Positions 377 and 401 each coordinate Zn(2+). The N-linked (GlcNAc...) asparagine glycan is linked to Asn-431. Residues Trp-476 and Lys-480 each contribute to the chloride site. The active-site Proton donor is the His-504. Tyr-514 contacts substrate. An intrachain disulfide couples Cys-529 to Cys-541. Asn-545 carries an N-linked (GlcNAc...) asparagine glycan. A Collectrin-like domain is found at 613-804 (SDQSIKVRIS…QNIDDVQTSL (192 aa)). Residues 651–658 (RKYFSEAR) are essential for cleavage by ADAM17. Asn-659 and Asn-689 each carry an N-linked (GlcNAc...) asparagine glycan. The interval 696–715 (RTEVENAIRLSRDRINDVFQ) is essential for cleavage by TMPRSS11D and TMPRSS2. Residues 740-760 (IWLIIFGVVMGVVVIGIVVLI) form a helical membrane-spanning segment. Topologically, residues 761–804 (FTGIRNRRKKNQASSEENPYGSVDLNKGENNSGFQNIDDVQTSL) are cytoplasmic. Residues 771 to 804 (NQASSEENPYGSVDLNKGENNSGFQNIDDVQTSL) form a disordered region. An LIR motif is present at residues 777-785 (ENPYGSVDL). Phosphotyrosine is present on Tyr-780. Residues 780–783 (YGSV) carry the Endocytic sorting signal motif. The SH2-binding signature appears at 780-784 (YGSVD). A Phosphoserine modification is found at Ser-782. A Glycyl lysine isopeptide (Lys-Gly) (interchain with G-Cter in ubiquitin) cross-link involves residue Lys-787. A compositionally biased stretch (polar residues) spans 788–804 (GENNSGFQNIDDVQTSL). The PTB signature appears at 791 to 794 (NSGF). A PDZ-binding motif is present at residues 802–804 (TSL).

Belongs to the peptidase M2 family. In terms of assembly, homodimer. Interacts with the catalytically active form of TMPRSS2. Interacts with SLC6A19; this interaction is essential for expression and function of SLC6A19 in intestine. Interacts with ITGA5:ITGB1. Probably interacts (via endocytic sorting signal motif) with AP2M1; the interaction is inhibited by phosphorylation of Tyr-780. Interacts (via PDZ-binding motif) with NHERF1 (via PDZ domains); the interaction may enhance ACE2 membrane residence. The cofactor is Zn(2+). Requires chloride as cofactor. Post-translationally, proteolytic cleavage by ADAM17 generates a secreted form. Also cleaved by serine proteases: TMPRSS2, TMPRSS11D and HPN/TMPRSS1. Phosphorylated. Phosphorylation at Tyr-780 probably inhibits interaction with AP2M1 and enables interactions with proteins containing SH2 domains. In terms of processing, ubiquitinated. Ubiquitinated on Lys-787 via 'Lys-48'-linked ubiquitin. 'Lys-48'-linked deubiquitinated by USP50 on the Lys-787; leading to its stabilization.

The protein localises to the secreted. It is found in the cell membrane. It localises to the cytoplasm. The protein resides in the cell projection. Its subcellular location is the cilium. The protein localises to the apical cell membrane. It carries out the reaction angiotensin II + H2O = angiotensin-(1-7) + L-phenylalanine. The catalysed reaction is angiotensin I + H2O = angiotensin-(1-9) + L-leucine. The enzyme catalyses bradykinin(1-8) + H2O = bradykinin(1-7) + L-phenylalanine. It catalyses the reaction neurotensin + H2O = neurotensin-(1-12) + L-leucine. It carries out the reaction kinetensin + H2O = kinetensin-(1-8) + L-leucine. The catalysed reaction is dynorphin A-(1-13) + H2O = dynorphin A-(1-12) + L-lysine. The enzyme catalyses apelin-13 + H2O = apelin-12 + L-phenylalanine. It catalyses the reaction [Pyr1]apelin-13 + H2O = [Pyr1]apelin-12 + L-phenylalanine. It carries out the reaction apelin-17 + H2O = apelin-16 + L-phenylalanine. In terms of biological role, essential counter-regulatory carboxypeptidase of the renin-angiotensin hormone system that is a critical regulator of blood volume, systemic vascular resistance, and thus cardiovascular homeostasis. Converts angiotensin I to angiotensin 1-9, a nine-amino acid peptide with anti-hypertrophic effects in cardiomyocytes, and angiotensin II to angiotensin 1-7, which then acts as a beneficial vasodilator and anti-proliferation agent, counterbalancing the actions of the vasoconstrictor angiotensin II. Also removes the C-terminal residue from three other vasoactive peptides, neurotensin, kinetensin, and des-Arg bradykinin, but is not active on bradykinin. Also cleaves other biological peptides, such as apelins, casomorphins and dynorphin A. Plays an important role in amino acid transport by acting as binding partner of amino acid transporter SLC6A19 in intestine, regulating trafficking, expression on the cell surface, and its catalytic activity. This chain is Angiotensin-converting enzyme 2 (ACE2), found in Bos taurus (Bovine).